The chain runs to 256 residues: Acetylglutamate kinase (256 aa).

Residues 40–41 (GG), arginine 62, and asparagine 153 each bind substrate.

Belongs to the acetylglutamate kinase family. ArgB subfamily.

It localises to the cytoplasm. It catalyses the reaction N-acetyl-L-glutamate + ATP = N-acetyl-L-glutamyl 5-phosphate + ADP. Its pathway is amino-acid biosynthesis; L-arginine biosynthesis; N(2)-acetyl-L-ornithine from L-glutamate: step 2/4. Functionally, catalyzes the ATP-dependent phosphorylation of N-acetyl-L-glutamate. This is Acetylglutamate kinase from Bacillus cytotoxicus (strain DSM 22905 / CIP 110041 / 391-98 / NVH 391-98).